Here is a 590-residue protein sequence, read N- to C-terminus: Neuronal PAS domain-containing protein 1 (590 aa).

Positions 45–98 constitute a bHLH domain; it reads QRKEKSRNAARSRRGKENLEFFELAKLLPLPGAISSQLDKASIVRLSVTYLRLR. The PAS 1 domain occupies 135 to 207; sequence EQHLGGHILQ…LGLRTPTPGP (73 aa). Positions 198–229 are disordered; that stretch reads LGLRTPTPGPPTPPSVSSSSSSSSSLADTPEI. Low complexity predominate over residues 212–222; it reads SVSSSSSSSSS. One can recognise a PAS 2 domain in the interval 293–359; that stretch reads APLAELPLHG…IRQSHVDLLD (67 aa). In terms of domain architecture, PAC spans 365–408; that stretch reads TGYYRWLQRAGGFVWLQSVATVAGSGKSPGEHHVLWVSHVLSQA. A disordered region spans residues 425–494; that stretch reads ACEEASSPGP…SHPATPRPEF (70 aa). The span at 433–442 shows a compositional bias: pro residues; it reads GPEPTEPEPP. Basic and acidic residues predominate over residues 463-476; the sequence is IKVEPGPRETKGSE.

As to quaternary structure, efficient DNA binding requires dimerization with another bHLH protein. Interacts with ARNT; forms a heterodimer that binds core DNA sequence 5'-[AG]CGTG-3' within the hypoxia response element (HRE) leading to a transcriptional repressor on its target gene TH.

It is found in the nucleus. May control regulatory pathways relevant to schizophrenia and to psychotic illness. May play a role in late central nervous system development by modulating EPO expression in response to cellular oxygen level. Forms a heterodimer that binds core DNA sequence 5'-TACGTG-3' within the hypoxia response element (HRE) leading to transcriptional repression on its target gene TH. The chain is Neuronal PAS domain-containing protein 1 (NPAS1) from Homo sapiens (Human).